The primary structure comprises 550 residues: Chaperonin GroEL (550 aa).

Residues 30 to 33, lysine 51, 87 to 91, glycine 415, and aspartate 496 each bind ATP; these read TLGP and DGTTT. A disordered region spans residues 526-550; it reads PEDEKMPPMPPGGGMGGMGGMGGMY. Residues 537–550 are compositionally biased toward gly residues; sequence GGGMGGMGGMGGMY.

The protein belongs to the chaperonin (HSP60) family. Forms a cylinder of 14 subunits composed of two heptameric rings stacked back-to-back. Interacts with the co-chaperonin GroES.

It localises to the cytoplasm. The enzyme catalyses ATP + H2O + a folded polypeptide = ADP + phosphate + an unfolded polypeptide.. Together with its co-chaperonin GroES, plays an essential role in assisting protein folding. The GroEL-GroES system forms a nano-cage that allows encapsulation of the non-native substrate proteins and provides a physical environment optimized to promote and accelerate protein folding. This chain is Chaperonin GroEL, found in Chloroherpeton thalassium (strain ATCC 35110 / GB-78).